Consider the following 216-residue polypeptide: Pyrophosphatase PpaX (216 aa).

D12 functions as the Nucleophile in the catalytic mechanism.

The protein belongs to the HAD-like hydrolase superfamily. PpaX family. Mg(2+) serves as cofactor.

It carries out the reaction diphosphate + H2O = 2 phosphate + H(+). Functionally, hydrolyzes pyrophosphate formed during P-Ser-HPr dephosphorylation by HPrK/P. Might play a role in controlling the intracellular pyrophosphate pool. In Bacillus pumilus (strain SAFR-032), this protein is Pyrophosphatase PpaX.